A 247-amino-acid polypeptide reads, in one-letter code: Type III pantothenate kinase (247 aa).

7 to 14 provides a ligand contact to ATP; sequence AIGNSRWH. Substrate contacts are provided by residues tyrosine 91 and 95 to 98; that span reads GLDR. Aspartate 97 serves as the catalytic Proton acceptor. Aspartate 117 is a binding site for K(+). ATP is bound at residue threonine 120. Residue threonine 172 coordinates substrate.

Belongs to the type III pantothenate kinase family. In terms of assembly, homodimer. NH4(+) is required as a cofactor. Requires K(+) as cofactor.

The protein resides in the cytoplasm. It carries out the reaction (R)-pantothenate + ATP = (R)-4'-phosphopantothenate + ADP + H(+). The protein operates within cofactor biosynthesis; coenzyme A biosynthesis; CoA from (R)-pantothenate: step 1/5. In terms of biological role, catalyzes the phosphorylation of pantothenate (Pan), the first step in CoA biosynthesis. The chain is Type III pantothenate kinase from Synechococcus elongatus (strain ATCC 33912 / PCC 7942 / FACHB-805) (Anacystis nidulans R2).